We begin with the raw amino-acid sequence, 96 residues long: Co-chaperonin GroES (96 aa).

Belongs to the GroES chaperonin family. As to quaternary structure, heptamer of 7 subunits arranged in a ring. Interacts with the chaperonin GroEL.

It is found in the cytoplasm. Together with the chaperonin GroEL, plays an essential role in assisting protein folding. The GroEL-GroES system forms a nano-cage that allows encapsulation of the non-native substrate proteins and provides a physical environment optimized to promote and accelerate protein folding. GroES binds to the apical surface of the GroEL ring, thereby capping the opening of the GroEL channel. The protein is Co-chaperonin GroES of Neisseria meningitidis serogroup B (strain ATCC BAA-335 / MC58).